Here is a 341-residue protein sequence, read N- to C-terminus: ATPase GET3 (341 aa).

Residue 34–41 participates in ATP binding; sequence KGGVGKTT. Residue Asp63 is part of the active site. ATP-binding residues include Glu245 and Asn272. Cys283 and Cys286 together coordinate Zn(2+).

Belongs to the arsA ATPase family. Homodimer.

It localises to the cytoplasm. The protein resides in the endoplasmic reticulum. In terms of biological role, ATPase required for the post-translational delivery of tail-anchored (TA) proteins to the endoplasmic reticulum. Recognizes and selectively binds the transmembrane domain of TA proteins in the cytosol. This complex then targets to the endoplasmic reticulum by membrane-bound receptors, where the tail-anchored protein is released for insertion. This process is regulated by ATP binding and hydrolysis. ATP binding drives the homodimer towards the closed dimer state, facilitating recognition of newly synthesized TA membrane proteins. ATP hydrolysis is required for insertion. Subsequently, the homodimer reverts towards the open dimer state, lowering its affinity for the membrane-bound receptor, and returning it to the cytosol to initiate a new round of targeting. The protein is ATPase GET3 of Ajellomyces dermatitidis (strain ER-3 / ATCC MYA-2586) (Blastomyces dermatitidis).